A 109-amino-acid polypeptide reads, in one-letter code: DVQMTQSPSYLAASPGESVSISCKASNKSISNNLAWYZZKPGKANKLLISSGSTLQSGTPSRFSGSGSDTDFTLTIRSLEFQDFAVYYCZZYNEPYYTFGAGTMLELKR.

Residues Asp-1–Cys-23 form a framework-1 region. The segment at Lys-24 to Ala-35 is complementarity-determining-1. The segment at Trp-36–Ser-50 is framework-2. Positions Ser-51 to Ser-57 are complementarity-determining-2. The tract at residues Gly-58–Cys-89 is framework-3. Positions Glx-90–Thr-98 are complementarity-determining-3. The framework-4 stretch occupies residues Phe-99–Lys-108.

The sequence is that of Ig kappa chain V region S211 from Rattus norvegicus (Rat).